The primary structure comprises 477 residues: Ribulose bisphosphate carboxylase large chain (477 aa).

Residues 1–2 (MS) constitute a propeptide that is removed on maturation. Residue proline 3 is modified to N-acetylproline. An N6,N6,N6-trimethyllysine modification is found at lysine 14. Asparagine 123 and threonine 173 together coordinate substrate. The active-site Proton acceptor is lysine 175. Lysine 177 lines the substrate pocket. Lysine 201, aspartate 203, and glutamate 204 together coordinate Mg(2+). Lysine 201 carries the N6-carboxylysine modification. Histidine 294 (proton acceptor) is an active-site residue. Substrate-binding residues include arginine 295, histidine 327, and serine 379.

The protein belongs to the RuBisCO large chain family. Type I subfamily. As to quaternary structure, heterohexadecamer of 8 large chains and 8 small chains; disulfide-linked. The disulfide link is formed within the large subunit homodimers. The cofactor is Mg(2+). In terms of processing, the disulfide bond which can form in the large chain dimeric partners within the hexadecamer appears to be associated with oxidative stress and protein turnover.

Its subcellular location is the plastid. The protein localises to the chloroplast. It catalyses the reaction 2 (2R)-3-phosphoglycerate + 2 H(+) = D-ribulose 1,5-bisphosphate + CO2 + H2O. The catalysed reaction is D-ribulose 1,5-bisphosphate + O2 = 2-phosphoglycolate + (2R)-3-phosphoglycerate + 2 H(+). Its function is as follows. RuBisCO catalyzes two reactions: the carboxylation of D-ribulose 1,5-bisphosphate, the primary event in carbon dioxide fixation, as well as the oxidative fragmentation of the pentose substrate in the photorespiration process. Both reactions occur simultaneously and in competition at the same active site. The chain is Ribulose bisphosphate carboxylase large chain from Persea americana (Avocado).